Consider the following 900-residue polypeptide: Alanine--tRNA ligase (900 aa).

Zn(2+) contacts are provided by His-604, His-608, Cys-708, and His-712.

The protein belongs to the class-II aminoacyl-tRNA synthetase family. Requires Zn(2+) as cofactor.

The protein resides in the cytoplasm. It catalyses the reaction tRNA(Ala) + L-alanine + ATP = L-alanyl-tRNA(Ala) + AMP + diphosphate. Catalyzes the attachment of alanine to tRNA(Ala) in a two-step reaction: alanine is first activated by ATP to form Ala-AMP and then transferred to the acceptor end of tRNA(Ala). Also edits incorrectly charged Ser-tRNA(Ala) and Gly-tRNA(Ala) via its editing domain. The protein is Alanine--tRNA ligase of Saccharolobus islandicus (strain M.14.25 / Kamchatka #1) (Sulfolobus islandicus).